We begin with the raw amino-acid sequence, 921 residues long: Translation initiation factor IF-2 (921 aa).

The tract at residues 1 to 296 (MADQNTPGDK…PGPQKQRGRL (296 aa)) is disordered. Over residues 80–89 (RPSGPRPSGG) the composition is skewed to low complexity. Residues 117 to 183 (ARVRDLEERR…AKKRFGEGEA (67 aa)) are compositionally biased toward basic and acidic residues. Low complexity-rich tracts occupy residues 184-237 (PRPA…ARPA) and 248-257 (GRAPAAVAAG). One can recognise a tr-type G domain in the interval 417-586 (PRSPVVTVMG…MIALQADILD (170 aa)). The interval 426–433 (GHVDHGKT) is G1. Residue 426-433 (GHVDHGKT) coordinates GTP. Positions 451–455 (GITQH) are G2. Residues 474-477 (DTPG) form a G3 region. Residues 474–478 (DTPGH) and 528–531 (NKID) each bind GTP. Residues 528–531 (NKID) are G4. Positions 564–566 (SAK) are G5.

Belongs to the TRAFAC class translation factor GTPase superfamily. Classic translation factor GTPase family. IF-2 subfamily.

It localises to the cytoplasm. In terms of biological role, one of the essential components for the initiation of protein synthesis. Protects formylmethionyl-tRNA from spontaneous hydrolysis and promotes its binding to the 30S ribosomal subunits. Also involved in the hydrolysis of GTP during the formation of the 70S ribosomal complex. This chain is Translation initiation factor IF-2, found in Bradyrhizobium sp. (strain ORS 278).